Reading from the N-terminus, the 589-residue chain is Aspartate--tRNA ligase (589 aa).

Glu-174 is an L-aspartate binding site. An aspartate region spans residues Gln-198–Lys-201. Position 220 (Arg-220) interacts with L-aspartate. Residues Arg-220–Glu-222 and Gln-229 each bind ATP. Residue His-448 coordinates L-aspartate. Position 483 (Glu-483) interacts with ATP. Position 490 (Arg-490) interacts with L-aspartate. ATP is bound at residue Gly-535 to Arg-538.

Belongs to the class-II aminoacyl-tRNA synthetase family. Type 1 subfamily. Homodimer.

The protein localises to the cytoplasm. It catalyses the reaction tRNA(Asp) + L-aspartate + ATP = L-aspartyl-tRNA(Asp) + AMP + diphosphate. Functionally, catalyzes the attachment of L-aspartate to tRNA(Asp) in a two-step reaction: L-aspartate is first activated by ATP to form Asp-AMP and then transferred to the acceptor end of tRNA(Asp). The protein is Aspartate--tRNA ligase of Xylella fastidiosa (strain M23).